The chain runs to 178 residues: Colicin-A immunity protein (178 aa).

At 1 to 13 (MMNEHSIDTDNRK) the chain is on the cytoplasmic side. The helical transmembrane segment at 14 to 37 (ANNALYLFIIIGLIPLLCIFVVYY) threads the bilayer. The Periplasmic segment spans residues 38 to 68 (KTPDALLLRKIATSTENLPSITSSYNPLMTK). A helical transmembrane segment spans residues 69–89 (VMDIYCKTAPFLALILYILTF). At 90-105 (KIRKLINNTDRNTVLR) the chain is on the cytoplasmic side. The helical transmembrane segment at 106–123 (SCLLSPLVYAAIVYLFCF) threads the bilayer. Topologically, residues 124–142 (RNFELTTAGRPVRLMATND) are periplasmic. A helical transmembrane segment spans residues 143 to 165 (ATLLLFYIGLYSIIFFTTYITLF). The Cytoplasmic portion of the chain corresponds to 166–178 (TPVTAFKLLKKRQ).

It is found in the cell inner membrane. In terms of biological role, this protein is able to protect a cell, which harbors the plasmid ColA encoding colicin A, against colicin A. The sequence is that of Colicin-A immunity protein (cai) from Citrobacter freundii.